Here is a 462-residue protein sequence, read N- to C-terminus: MTQKIRTRFAPSPTGFIHLGNIRSALYPWAFARATGGDFILRIEDTDVERSSQAAVDVIIEGMRWLGLDHDEGPFYQMQRMDRYKAVLAEMQAAGQVYPCYMSVAELDALREKQMAAKEKPRYDGTWRPEPGKTLPPIPAGVQPVLRFKNPQGGSVVWDDKVKGRIEISNDELDDLVIARPDGTPTYNFCVVVDDIDMAITHVIRGDDHVNNTPRQINIFRALGKDVPVYAHLPTVLNEQGEKMSKRNGAKPVTQYAAEGYLPDAMVNYLARLGWSHGDDEIFSREQFLKWFNLDHLGKSAAQFDEAKLRWVNAQHLKATADDKLAELVQPFLAARGVGLDTARMVGGCGLFKDRCSTLVELADWLQLLVTGGQPSAQDISTHVTEAVRPALGKLADALVACEWSKAAIAAAIKQVLAETGLKMPQLAMAVRVLVMGTPQTPSLDAILELMKREDVISRLKI.

The 'HIGH' region signature appears at 11-21 (PSPTGFIHLGN). Residues 120–131 (KPRYDGTWRPEP) are compositionally biased toward basic and acidic residues. The disordered stretch occupies residues 120–140 (KPRYDGTWRPEPGKTLPPIPA). The short motif at 243 to 247 (KMSKR) is the 'KMSKS' region element. An ATP-binding site is contributed by Lys246.

It belongs to the class-I aminoacyl-tRNA synthetase family. Glutamate--tRNA ligase type 1 subfamily. In terms of assembly, monomer.

It is found in the cytoplasm. The enzyme catalyses tRNA(Glu) + L-glutamate + ATP = L-glutamyl-tRNA(Glu) + AMP + diphosphate. Functionally, catalyzes the attachment of glutamate to tRNA(Glu) in a two-step reaction: glutamate is first activated by ATP to form Glu-AMP and then transferred to the acceptor end of tRNA(Glu). This Polaromonas sp. (strain JS666 / ATCC BAA-500) protein is Glutamate--tRNA ligase.